We begin with the raw amino-acid sequence, 226 residues long: UPF0319 protein SO_1816 (226 aa).

The signal sequence occupies residues 1–21; sequence MKSLLPISSLLVLLGSASVSA.

It belongs to the UPF0319 family.

This is UPF0319 protein SO_1816 from Shewanella oneidensis (strain ATCC 700550 / JCM 31522 / CIP 106686 / LMG 19005 / NCIMB 14063 / MR-1).